A 475-amino-acid chain; its full sequence is Phenolic acid decarboxylase (475 aa).

3 residues coordinate Mn(2+): Asn161, His183, and Glu225. Residues 161–166 (NVGIYR) and 182–183 (MH) contribute to the prenylated FMN site. Glu274 serves as the catalytic Proton donor.

Belongs to the UbiD family. YclC subfamily. Requires prenylated FMN as cofactor. Mn(2+) is required as a cofactor.

The catalysed reaction is 4-hydroxybenzoate + H(+) = phenol + CO2. It catalyses the reaction vanillate + H(+) = guaiacol + CO2. Functionally, involved in the non-oxidative decarboxylation and detoxification of phenolic derivatives under both aerobic and anaerobic conditions. Phenolic acid decarboxylase that catalyzes the reversible decarboxylation of 4-hydroxybenzoate and vanillate. This chain is Phenolic acid decarboxylase, found in Escherichia coli O157:H7.